A 101-amino-acid chain; its full sequence is Phosphoribosyl-AMP cyclohydrolase (101 aa).

Asp71 serves as a coordination point for Mg(2+). A Zn(2+)-binding site is contributed by Cys72. Mg(2+) is bound by residues Asp73 and Asp75. 2 residues coordinate Zn(2+): Cys88 and Cys95.

It belongs to the PRA-CH family. Homodimer. Requires Mg(2+) as cofactor. Zn(2+) serves as cofactor.

The protein resides in the cytoplasm. The enzyme catalyses 1-(5-phospho-beta-D-ribosyl)-5'-AMP + H2O = 1-(5-phospho-beta-D-ribosyl)-5-[(5-phospho-beta-D-ribosylamino)methylideneamino]imidazole-4-carboxamide. The protein operates within amino-acid biosynthesis; L-histidine biosynthesis; L-histidine from 5-phospho-alpha-D-ribose 1-diphosphate: step 3/9. Its function is as follows. Catalyzes the hydrolysis of the adenine ring of phosphoribosyl-AMP. This Bacillus cereus (strain B4264) protein is Phosphoribosyl-AMP cyclohydrolase.